Here is a 286-residue protein sequence, read N- to C-terminus: Bifunctional protein FolD (286 aa).

NADP(+)-binding positions include glycine 165–serine 167, serine 190, and isoleucine 231.

This sequence belongs to the tetrahydrofolate dehydrogenase/cyclohydrolase family. As to quaternary structure, homodimer.

It catalyses the reaction (6R)-5,10-methylene-5,6,7,8-tetrahydrofolate + NADP(+) = (6R)-5,10-methenyltetrahydrofolate + NADPH. It carries out the reaction (6R)-5,10-methenyltetrahydrofolate + H2O = (6R)-10-formyltetrahydrofolate + H(+). It participates in one-carbon metabolism; tetrahydrofolate interconversion. Functionally, catalyzes the oxidation of 5,10-methylenetetrahydrofolate to 5,10-methenyltetrahydrofolate and then the hydrolysis of 5,10-methenyltetrahydrofolate to 10-formyltetrahydrofolate. The chain is Bifunctional protein FolD from Thermodesulfovibrio yellowstonii (strain ATCC 51303 / DSM 11347 / YP87).